We begin with the raw amino-acid sequence, 85 residues long: Putative membrane protein insertion efficiency factor (85 aa).

Belongs to the UPF0161 family.

The protein resides in the cell inner membrane. Its function is as follows. Could be involved in insertion of integral membrane proteins into the membrane. In Dictyoglomus thermophilum (strain ATCC 35947 / DSM 3960 / H-6-12), this protein is Putative membrane protein insertion efficiency factor.